Consider the following 280-residue polypeptide: Acyl-[acyl-carrier-protein]--UDP-N-acetylglucosamine O-acyltransferase (280 aa).

This sequence belongs to the transferase hexapeptide repeat family. LpxA subfamily. As to quaternary structure, homotrimer.

The protein localises to the cytoplasm. The enzyme catalyses a (3R)-hydroxyacyl-[ACP] + UDP-N-acetyl-alpha-D-glucosamine = a UDP-3-O-[(3R)-3-hydroxyacyl]-N-acetyl-alpha-D-glucosamine + holo-[ACP]. The protein operates within glycolipid biosynthesis; lipid IV(A) biosynthesis; lipid IV(A) from (3R)-3-hydroxytetradecanoyl-[acyl-carrier-protein] and UDP-N-acetyl-alpha-D-glucosamine: step 1/6. Involved in the biosynthesis of lipid A, a phosphorylated glycolipid that anchors the lipopolysaccharide to the outer membrane of the cell. This is Acyl-[acyl-carrier-protein]--UDP-N-acetylglucosamine O-acyltransferase from Chlamydia muridarum (strain MoPn / Nigg).